Consider the following 162-residue polypeptide: Inorganic pyrophosphatase (162 aa).

Residue Glu8 participates in Mg(2+) binding. Substrate-binding residues include Lys16, Arg30, and Tyr42. 4 residues coordinate Mg(2+): Asp52, Asp57, Asp84, and Asp89. Asp89 serves as the catalytic Proton acceptor. Tyr126 serves as a coordination point for substrate.

It belongs to the PPase family. Homohexamer. Mg(2+) is required as a cofactor.

Its subcellular location is the cytoplasm. The catalysed reaction is diphosphate + H2O = 2 phosphate + H(+). In terms of biological role, catalyzes the hydrolysis of inorganic pyrophosphate (PPi) forming two phosphate ions. The protein is Inorganic pyrophosphatase of Mycobacterium leprae (strain TN).